An 88-amino-acid polypeptide reads, in one-letter code: UPF0297 protein EAT1b_2723 (88 aa).

This sequence belongs to the UPF0297 family.

The chain is UPF0297 protein EAT1b_2723 from Exiguobacterium sp. (strain ATCC BAA-1283 / AT1b).